Consider the following 273-residue polypeptide: Dermonecrotic toxin LspaSicTox-alphaIA2iv (273 aa).

His5 is a catalytic residue. Residues Glu25 and Asp27 each coordinate Mg(2+). His41 acts as the Nucleophile in catalysis. Intrachain disulfides connect Cys45-Cys51 and Cys47-Cys190. Asp85 is a Mg(2+) binding site.

It belongs to the arthropod phospholipase D family. Class II subfamily. Mg(2+) serves as cofactor. As to expression, expressed by the venom gland.

The protein resides in the secreted. The catalysed reaction is an N-(acyl)-sphingosylphosphocholine = an N-(acyl)-sphingosyl-1,3-cyclic phosphate + choline. It carries out the reaction an N-(acyl)-sphingosylphosphoethanolamine = an N-(acyl)-sphingosyl-1,3-cyclic phosphate + ethanolamine. It catalyses the reaction a 1-acyl-sn-glycero-3-phosphocholine = a 1-acyl-sn-glycero-2,3-cyclic phosphate + choline. The enzyme catalyses a 1-acyl-sn-glycero-3-phosphoethanolamine = a 1-acyl-sn-glycero-2,3-cyclic phosphate + ethanolamine. In terms of biological role, dermonecrotic toxins cleave the phosphodiester linkage between the phosphate and headgroup of certain phospholipids (sphingolipid and lysolipid substrates), forming an alcohol (often choline) and a cyclic phosphate. This toxin acts on sphingomyelin (SM). It may also act on ceramide phosphoethanolamine (CPE), lysophosphatidylcholine (LPC) and lysophosphatidylethanolamine (LPE), but not on lysophosphatidylserine (LPS), and lysophosphatidylglycerol (LPG). It acts by transphosphatidylation, releasing exclusively cyclic phosphate products as second products. Induces dermonecrosis, hemolysis, increased vascular permeability, edema, inflammatory response, and platelet aggregation. The polypeptide is Dermonecrotic toxin LspaSicTox-alphaIA2iv (Loxosceles spadicea (Recluse spider)).